The following is a 359-amino-acid chain: Peptide chain release factor 1 (359 aa).

Glutamine 236 carries the post-translational modification N5-methylglutamine. Positions 288-307 are disordered; sequence QDEQDAERKSTIGTGDRSER. The span at 293–307 shows a compositional bias: basic and acidic residues; the sequence is AERKSTIGTGDRSER.

The protein belongs to the prokaryotic/mitochondrial release factor family. Post-translationally, methylated by PrmC. Methylation increases the termination efficiency of RF1.

The protein resides in the cytoplasm. In terms of biological role, peptide chain release factor 1 directs the termination of translation in response to the peptide chain termination codons UAG and UAA. This chain is Peptide chain release factor 1 (prfA), found in Streptococcus gordonii (strain Challis / ATCC 35105 / BCRC 15272 / CH1 / DL1 / V288).